A 441-amino-acid chain; its full sequence is Glutamyl-tRNA reductase (441 aa).

Substrate is bound by residues 47–50 (TCNR), Ser-110, 115–117 (ERE), and Gln-121. Cys-48 (nucleophile) is an active-site residue. 192-197 (GTGAYA) lines the NADP(+) pocket.

This sequence belongs to the glutamyl-tRNA reductase family. As to quaternary structure, homodimer.

It catalyses the reaction (S)-4-amino-5-oxopentanoate + tRNA(Glu) + NADP(+) = L-glutamyl-tRNA(Glu) + NADPH + H(+). It participates in porphyrin-containing compound metabolism; protoporphyrin-IX biosynthesis; 5-aminolevulinate from L-glutamyl-tRNA(Glu): step 1/2. Functionally, catalyzes the NADPH-dependent reduction of glutamyl-tRNA(Glu) to glutamate 1-semialdehyde (GSA). This Pseudarthrobacter chlorophenolicus (strain ATCC 700700 / DSM 12829 / CIP 107037 / JCM 12360 / KCTC 9906 / NCIMB 13794 / A6) (Arthrobacter chlorophenolicus) protein is Glutamyl-tRNA reductase.